A 143-amino-acid polypeptide reads, in one-letter code: Hemoglobin cathodic subunit alpha (143 aa).

The residue at position 2 (Ser2) is an N-acetylserine. Positions 2–143 (SLTAKDKTLV…VSAALADKYR (142 aa)) constitute a Globin domain. His59 is an O2 binding site. Position 89 (His89) interacts with heme b.

The protein belongs to the globin family. Heterotetramer of two alpha chains and two beta chains. As to expression, red blood cells.

In terms of biological role, involved in oxygen transport from the gills to the various peripheral tissues. The chain is Hemoglobin cathodic subunit alpha from Conger conger (Conger eel).